Here is a 486-residue protein sequence, read N- to C-terminus: ATP synthase subunit beta (486 aa).

170–177 (GGAGVGKT) contacts ATP.

Belongs to the ATPase alpha/beta chains family. In terms of assembly, F-type ATPases have 2 components, CF(1) - the catalytic core - and CF(0) - the membrane proton channel. CF(1) has five subunits: alpha(3), beta(3), gamma(1), delta(1), epsilon(1). CF(0) has three main subunits: a(1), b(2) and c(9-12). The alpha and beta chains form an alternating ring which encloses part of the gamma chain. CF(1) is attached to CF(0) by a central stalk formed by the gamma and epsilon chains, while a peripheral stalk is formed by the delta and b chains.

It is found in the cell membrane. It carries out the reaction ATP + H2O + 4 H(+)(in) = ADP + phosphate + 5 H(+)(out). Its function is as follows. Produces ATP from ADP in the presence of a proton gradient across the membrane. The catalytic sites are hosted primarily by the beta subunits. This chain is ATP synthase subunit beta, found in Kineococcus radiotolerans (strain ATCC BAA-149 / DSM 14245 / SRS30216).